Here is a 317-residue protein sequence, read N- to C-terminus: Malate dehydrogenase (317 aa).

NAD(+) contacts are provided by residues 10-15 and Asp-34; that span reads GGGQIG. Substrate-binding residues include Arg-83 and Arg-89. Residues Asn-96 and 119 to 121 each bind NAD(+); that span reads ISN. Residues Asn-121 and Arg-152 each coordinate substrate. Residue His-176 is the Proton acceptor of the active site.

The protein belongs to the LDH/MDH superfamily. MDH type 3 family.

It carries out the reaction (S)-malate + NAD(+) = oxaloacetate + NADH + H(+). Functionally, catalyzes the reversible oxidation of malate to oxaloacetate. The chain is Malate dehydrogenase from Citrifermentans bemidjiense (strain ATCC BAA-1014 / DSM 16622 / JCM 12645 / Bem) (Geobacter bemidjiensis).